Here is a 632-residue protein sequence, read N- to C-terminus: 1-deoxy-D-xylulose-5-phosphate synthase (632 aa).

Residues His-78 and 119–121 contribute to the thiamine diphosphate site; that span reads AHS. Position 150 (Asp-150) interacts with Mg(2+). Thiamine diphosphate contacts are provided by residues 151 to 152, Asn-179, Tyr-286, and Glu-368; that span reads GA. Asn-179 provides a ligand contact to Mg(2+).

This sequence belongs to the transketolase family. DXPS subfamily. As to quaternary structure, homodimer. Mg(2+) is required as a cofactor. Requires thiamine diphosphate as cofactor.

It catalyses the reaction D-glyceraldehyde 3-phosphate + pyruvate + H(+) = 1-deoxy-D-xylulose 5-phosphate + CO2. It participates in metabolic intermediate biosynthesis; 1-deoxy-D-xylulose 5-phosphate biosynthesis; 1-deoxy-D-xylulose 5-phosphate from D-glyceraldehyde 3-phosphate and pyruvate: step 1/1. In terms of biological role, catalyzes the acyloin condensation reaction between C atoms 2 and 3 of pyruvate and glyceraldehyde 3-phosphate to yield 1-deoxy-D-xylulose-5-phosphate (DXP). The polypeptide is 1-deoxy-D-xylulose-5-phosphate synthase (Albidiferax ferrireducens (strain ATCC BAA-621 / DSM 15236 / T118) (Rhodoferax ferrireducens)).